A 73-amino-acid polypeptide reads, in one-letter code: Toxin Td4 (73 aa).

The first 7 residues, 1–7, serve as a signal peptide directing secretion; the sequence is IGMVVEC. One can recognise an LCN-type CS-alpha/beta domain in the interval 8 to 70; that stretch reads KDGYLVGNDG…TWDRATNRCG (63 aa). 4 cysteine pairs are disulfide-bonded: Cys18/Cys69, Cys22/Cys44, Cys30/Cys50, and Cys34/Cys52. The residue at position 71 (Arg71) is an Arginine amide.

This sequence belongs to the long (4 C-C) scorpion toxin superfamily. Sodium channel inhibitor family. Beta subfamily. Expressed by the venom gland.

Its subcellular location is the secreted. Functionally, beta toxins bind voltage-independently at site-4 of sodium channels (Nav) and shift the voltage of activation toward more negative potentials thereby affecting sodium channel activation and promoting spontaneous and repetitive firing. In Tityus discrepans (Venezuelan scorpion), this protein is Toxin Td4.